We begin with the raw amino-acid sequence, 276 residues long: Large ribosomal subunit protein uL2 (276 aa).

The disordered stretch occupies residues 226–276 (MNSVDHPHGGGEGKTSGGRHPVSPWGTPTKGYKTRSNKRTDKLILRHRNKG).

Belongs to the universal ribosomal protein uL2 family. As to quaternary structure, part of the 50S ribosomal subunit. Forms a bridge to the 30S subunit in the 70S ribosome.

One of the primary rRNA binding proteins. Required for association of the 30S and 50S subunits to form the 70S ribosome, for tRNA binding and peptide bond formation. It has been suggested to have peptidyltransferase activity; this is somewhat controversial. Makes several contacts with the 16S rRNA in the 70S ribosome. The protein is Large ribosomal subunit protein uL2 of Vesicomyosocius okutanii subsp. Calyptogena okutanii (strain HA).